Here is a 746-residue protein sequence, read N- to C-terminus: Alpha-galactosidase 2 (746 aa).

The N-terminal stretch at 1-26 (MLGAPSPRRLADVLAVTAGLVASVRA) is a signal peptide. Asn-43, Asn-156, Asn-180, Asn-188, Asn-360, Asn-427, Asn-446, and Asn-495 each carry an N-linked (GlcNAc...) asparagine glycan. Asp-504 acts as the Nucleophile in catalysis. Asp-566 functions as the Proton donor in the catalytic mechanism. A glycan (N-linked (GlcNAc...) asparagine) is linked at Asn-714.

This sequence belongs to the glycosyl hydrolase 27 family.

The protein resides in the secreted. It catalyses the reaction Hydrolysis of terminal, non-reducing alpha-D-galactose residues in alpha-D-galactosides, including galactose oligosaccharides, galactomannans and galactolipids.. Alpha-galactosidase involved in the degradation of simple oligosaccharides like melibiose, raffinose and stachyose, and of polymeric galacto(gluco)mannans. This Hypocrea jecorina (Trichoderma reesei) protein is Alpha-galactosidase 2 (agl2).